Reading from the N-terminus, the 142-residue chain is AP-2 complex subunit sigma (142 aa).

Belongs to the adaptor complexes small subunit family. In terms of assembly, adaptor protein complex 2 (AP-2) is a heterotetramer composed of two large adaptins (alpha-type and beta-type subunits), a medium adaptin (mu-type subunit AP50) and a small adaptin (sigma-type subunit AP17).

It localises to the cell membrane. It is found in the membrane. The protein localises to the coated pit. Its function is as follows. Component of the adaptor complexes which link clathrin to receptors in coated vesicles. Clathrin-associated protein complexes are believed to interact with the cytoplasmic tails of membrane proteins, leading to their selection and concentration. This is AP-2 complex subunit sigma (ap2s1) from Dictyostelium discoideum (Social amoeba).